Consider the following 276-residue polypeptide: NAD-capped RNA hydrolase NudC (276 aa).

R82 is a substrate binding site. 2 residues coordinate Zn(2+): C112 and C115. E125 is a binding site for substrate. 2 residues coordinate Zn(2+): C130 and C133. Y138 is a binding site for substrate. The region spanning 139-262 is the Nudix hydrolase domain; it reads PRISPSMIVL…SIARYLIDLY (124 aa). Residues A172, E188, and E192 each coordinate a divalent metal cation. The Nudix box signature appears at 173–194; it reads GFAEPGESAEDCLVREVREEVA. Substrate is bound at residue 206–213; it reads QCWPFPHS. E233 contacts a divalent metal cation. A255 contacts substrate.

The protein belongs to the Nudix hydrolase family. NudC subfamily. In terms of assembly, homodimer. Requires Mg(2+) as cofactor. Mn(2+) serves as cofactor. The cofactor is Zn(2+).

It catalyses the reaction a 5'-end NAD(+)-phospho-ribonucleoside in mRNA + H2O = a 5'-end phospho-adenosine-phospho-ribonucleoside in mRNA + beta-nicotinamide D-ribonucleotide + 2 H(+). The enzyme catalyses NAD(+) + H2O = beta-nicotinamide D-ribonucleotide + AMP + 2 H(+). It carries out the reaction NADH + H2O = reduced beta-nicotinamide D-ribonucleotide + AMP + 2 H(+). MRNA decapping enzyme that specifically removes the nicotinamide adenine dinucleotide (NAD) cap from a subset of mRNAs by hydrolyzing the diphosphate linkage to produce nicotinamide mononucleotide (NMN) and 5' monophosphate mRNA. The NAD-cap is present at the 5'-end of some mRNAs and stabilizes RNA against 5'-processing. Has preference for mRNAs with a 5'-end purine. Catalyzes the hydrolysis of a broad range of dinucleotide pyrophosphates. The chain is NAD-capped RNA hydrolase NudC from Pseudomonas putida (strain W619).